Here is a 655-residue protein sequence, read N- to C-terminus: p-hydroxybenzoic acid efflux pump subunit AaeB (655 aa).

Residues Met1–Arg12 are Periplasmic-facing. Residues Phe13–Leu33 traverse the membrane as a helical segment. The Cytoplasmic portion of the chain corresponds to Glu34–Arg37. Residues Trp38 to Pro58 traverse the membrane as a helical segment. The Periplasmic segment spans residues Tyr59–Met68. Residues Leu69–Ile89 form a helical membrane-spanning segment. Residues Arg90 to Pro92 lie on the Cytoplasmic side of the membrane. Residues Leu93–Val113 traverse the membrane as a helical segment. Residues Arg114–Ala120 lie on the Periplasmic side of the membrane. Residues Trp121–Leu141 form a helical membrane-spanning segment. The Cytoplasmic portion of the chain corresponds to Thr142–Ser151. A helical membrane pass occupies residues Glu152–Ile172. Topologically, residues Lys173–Thr369 are periplasmic. The chain crosses the membrane as a helical span at residues Leu370–Val390. Residues Thr391–Asp406 lie on the Cytoplasmic side of the membrane. A helical membrane pass occupies residues Phe407 to Pro427. Topologically, residues Asn428–Gln430 are periplasmic. A helical transmembrane segment spans residues Gln431–Val451. Residues Gln452–Ser458 lie on the Cytoplasmic side of the membrane. Residues Met459 to Phe479 form a helical membrane-spanning segment. Residues Ser480–Gln481 lie on the Periplasmic side of the membrane. Residues Phe482 to Leu502 traverse the membrane as a helical segment. Topologically, residues Val503–Ser655 are cytoplasmic.

This sequence belongs to the aromatic acid exporter ArAE (TC 2.A.85) family.

It is found in the cell inner membrane. Functionally, forms an efflux pump with AaeA. Could function as a metabolic relief valve, allowing to eliminate certain compounds when they accumulate to high levels in the cell. The chain is p-hydroxybenzoic acid efflux pump subunit AaeB from Salmonella paratyphi A (strain ATCC 9150 / SARB42).